The following is a 71-amino-acid chain: Vitellogenin-B1 (71 aa).

Residues 1-15 form the signal peptide; that stretch reads MRGIILAQLLALAGS. Residues 24–71 form the Vitellogenin domain; sequence FSESKPYVYNYEGIILNGIPENGLARSGIKLNCKAEISGYAQRSYMLK.

In terms of tissue distribution, produced by the liver, secreted into the blood and then sequestered by receptor mediated endocytosis into growing oocytes, where it is generally cleaved, giving rise to the respective yolk components.

Its function is as follows. Precursor of the major egg-yolk proteins that are sources of nutrients during early development of oviparous organisms. The polypeptide is Vitellogenin-B1 (Xenopus laevis (African clawed frog)).